A 194-amino-acid chain; its full sequence is ATP synthase subunit delta (194 aa).

It belongs to the ATPase delta chain family. As to quaternary structure, F-type ATPases have 2 components, F(1) - the catalytic core - and F(0) - the membrane proton channel. F(1) has five subunits: alpha(3), beta(3), gamma(1), delta(1), epsilon(1). F(0) has three main subunits: a(1), b(2) and c(10-14). The alpha and beta chains form an alternating ring which encloses part of the gamma chain. F(1) is attached to F(0) by a central stalk formed by the gamma and epsilon chains, while a peripheral stalk is formed by the delta and b chains.

It localises to the cell inner membrane. Its function is as follows. F(1)F(0) ATP synthase produces ATP from ADP in the presence of a proton or sodium gradient. F-type ATPases consist of two structural domains, F(1) containing the extramembraneous catalytic core and F(0) containing the membrane proton channel, linked together by a central stalk and a peripheral stalk. During catalysis, ATP synthesis in the catalytic domain of F(1) is coupled via a rotary mechanism of the central stalk subunits to proton translocation. In terms of biological role, this protein is part of the stalk that links CF(0) to CF(1). It either transmits conformational changes from CF(0) to CF(1) or is implicated in proton conduction. This chain is ATP synthase subunit delta, found in Bartonella quintana (strain Toulouse) (Rochalimaea quintana).